Consider the following 30-residue polypeptide: Cyclotide hyen-D (30 aa).

A cross-link (cyclopeptide (Gly-Asn)) is located at residues 1–30; sequence GFPCGESCVYIPCFTAAIGCSCKSKVCYKN. Intrachain disulfides connect Cys-4–Cys-20, Cys-8–Cys-22, and Cys-13–Cys-27.

This is a cyclic peptide. Detected in stems (at protein level).

Probably participates in a plant defense mechanism. Has strong cytotoxic activity against HUVEC cells (LC(50)= 0.58 uM) and various cancer cells including HeLa (LC(50)= 0.48 uM), MCF-7 and K562. Also displays some hemolytic activity. Binds to and induces leakage in phospholipd membranes, particularly ones containing 1-palmitoyl-2-oleophosphatidylethanolamine (POPE). The polypeptide is Cyclotide hyen-D (Pigea enneasperma (Spade flower)).